The sequence spans 701 residues: Polyribonucleotide nucleotidyltransferase (701 aa).

The Mg(2+) site is built by Asp485 and Asp491. A KH domain is found at Pro552–Ile611. Positions Gly621–Lys689 constitute an S1 motif domain.

The protein belongs to the polyribonucleotide nucleotidyltransferase family. It depends on Mg(2+) as a cofactor.

Its subcellular location is the cytoplasm. The catalysed reaction is RNA(n+1) + phosphate = RNA(n) + a ribonucleoside 5'-diphosphate. Involved in mRNA degradation. Catalyzes the phosphorolysis of single-stranded polyribonucleotides processively in the 3'- to 5'-direction. This Clostridium beijerinckii (strain ATCC 51743 / NCIMB 8052) (Clostridium acetobutylicum) protein is Polyribonucleotide nucleotidyltransferase.